Reading from the N-terminus, the 207-residue chain is N-(5'-phosphoribosyl)anthranilate isomerase (207 aa).

Belongs to the TrpF family.

It catalyses the reaction N-(5-phospho-beta-D-ribosyl)anthranilate = 1-(2-carboxyphenylamino)-1-deoxy-D-ribulose 5-phosphate. The protein operates within amino-acid biosynthesis; L-tryptophan biosynthesis; L-tryptophan from chorismate: step 3/5. The chain is N-(5'-phosphoribosyl)anthranilate isomerase from Halorhodospira halophila (strain DSM 244 / SL1) (Ectothiorhodospira halophila (strain DSM 244 / SL1)).